A 174-amino-acid polypeptide reads, in one-letter code: Nascent polypeptide-associated complex subunit alpha (174 aa).

N-acetylserine is present on Ser-2. The region spanning 14–78 (NKNEKKAREL…AKVDNFTQKL (65 aa)) is the NAC-A/B domain. The tract at residues 85–137 (AQASGIMPSNEDVATKSPEDIQADMQAAAEGSVNAAAEEDDEEGEVDAGDLNK) is disordered. Residue Ser-93 is modified to Phosphoserine. Over residues 111–120 (AAAEGSVNAA) the composition is skewed to low complexity. Residues 121–132 (AEEDDEEGEVDA) are compositionally biased toward acidic residues. One can recognise a UBA domain in the interval 135-174 (LNKDDIELVVQQTNVSKNQAIKALKAHNGDLVNAIMSLSK).

The protein belongs to the NAC-alpha family. Part of the nascent polypeptide-associated complex (NAC), consisting of EGD2 and either EGD1 or BTT1. NAC associates with ribosomes via EGD1 or BTT1, and with the CCR4-NOT complex.

The protein resides in the cytoplasm. It is found in the nucleus. In terms of biological role, component of the nascent polypeptide-associated complex (NAC), a dynamic component of the ribosomal exit tunnel, protecting the emerging polypeptides from interaction with other cytoplasmic proteins to ensure appropriate nascent protein targeting. The NAC complex also promotes mitochondrial protein import by enhancing productive ribosome interactions with the outer mitochondrial membrane and blocks the inappropriate interaction of ribosomes translating non-secretory nascent polypeptides with translocation sites in the membrane of the endoplasmic reticulum. EGD2 may also be involved in transcription regulation. The polypeptide is Nascent polypeptide-associated complex subunit alpha (EGD2) (Saccharomyces cerevisiae (strain YJM789) (Baker's yeast)).